The primary structure comprises 337 residues: Adenylosuccinate synthetase (337 aa).

GTP contacts are provided by residues 12–18 and 42–44; these read GDEGKGK and GHT. The Proton acceptor role is filled by Asp13. Asp13 and Gly42 together coordinate Mg(2+). Residues 13–16, 40–43, Thr127, Arg141, Gln179, Thr194, and Arg256 each bind IMP; these read DEGK and NAGH. The Proton donor role is filled by His43. 252–258 is a binding site for substrate; that stretch reads TVTGRRR. Residues Arg258, 284-286, and 324-326 each bind GTP; these read CLD and STG.

It belongs to the adenylosuccinate synthetase family. Homodimer. Requires Mg(2+) as cofactor.

The protein resides in the cytoplasm. It carries out the reaction IMP + L-aspartate + GTP = N(6)-(1,2-dicarboxyethyl)-AMP + GDP + phosphate + 2 H(+). The protein operates within purine metabolism; AMP biosynthesis via de novo pathway; AMP from IMP: step 1/2. In terms of biological role, plays an important role in the de novo pathway of purine nucleotide biosynthesis. Catalyzes the first committed step in the biosynthesis of AMP from IMP. This chain is Adenylosuccinate synthetase, found in Methanococcus maripaludis (strain C5 / ATCC BAA-1333).